The chain runs to 393 residues: S-adenosylmethionine synthase (393 aa).

His-16 lines the ATP pocket. Asp-18 contributes to the Mg(2+) binding site. Glu-44 serves as a coordination point for K(+). L-methionine is bound by residues Glu-57 and Gln-100. The flexible loop stretch occupies residues Gln-100–His-110. ATP is bound by residues Asp-167–Lys-169, Arg-238–Phe-239, Asp-247, Arg-253–Lys-254, Ala-270, and Lys-274. Asp-247 lines the L-methionine pocket. Lys-278 contacts L-methionine.

This sequence belongs to the AdoMet synthase family. As to quaternary structure, homotetramer; dimer of dimers. Mg(2+) serves as cofactor. Requires K(+) as cofactor.

The protein resides in the cytoplasm. The catalysed reaction is L-methionine + ATP + H2O = S-adenosyl-L-methionine + phosphate + diphosphate. It functions in the pathway amino-acid biosynthesis; S-adenosyl-L-methionine biosynthesis; S-adenosyl-L-methionine from L-methionine: step 1/1. In terms of biological role, catalyzes the formation of S-adenosylmethionine (AdoMet) from methionine and ATP. The overall synthetic reaction is composed of two sequential steps, AdoMet formation and the subsequent tripolyphosphate hydrolysis which occurs prior to release of AdoMet from the enzyme. This Acidovorax sp. (strain JS42) protein is S-adenosylmethionine synthase.